Here is a 602-residue protein sequence, read N- to C-terminus: Elongation factor 4 (602 aa).

One can recognise a tr-type G domain in the interval 7-188 (ENIRNFSIIA…AIVELIPPPK (182 aa)). GTP is bound by residues 19–24 (DHGKST) and 135–138 (NKID).

Belongs to the TRAFAC class translation factor GTPase superfamily. Classic translation factor GTPase family. LepA subfamily.

It localises to the cell inner membrane. It catalyses the reaction GTP + H2O = GDP + phosphate + H(+). Required for accurate and efficient protein synthesis under certain stress conditions. May act as a fidelity factor of the translation reaction, by catalyzing a one-codon backward translocation of tRNAs on improperly translocated ribosomes. Back-translocation proceeds from a post-translocation (POST) complex to a pre-translocation (PRE) complex, thus giving elongation factor G a second chance to translocate the tRNAs correctly. Binds to ribosomes in a GTP-dependent manner. This is Elongation factor 4 from Chlamydia abortus (strain DSM 27085 / S26/3) (Chlamydophila abortus).